A 594-amino-acid polypeptide reads, in one-letter code: Aspartate--tRNA(Asp/Asn) ligase (594 aa).

E175 is an L-aspartate binding site. The tract at residues 199–202 (QQFK) is aspartate. Positions 221 and 455 each coordinate L-aspartate. 221–223 (RDE) contributes to the ATP binding site. E488 lines the ATP pocket. R495 is a binding site for L-aspartate. 540 to 543 (GIDR) contributes to the ATP binding site.

This sequence belongs to the class-II aminoacyl-tRNA synthetase family. Type 1 subfamily. As to quaternary structure, homodimer.

The protein resides in the cytoplasm. It catalyses the reaction tRNA(Asx) + L-aspartate + ATP = L-aspartyl-tRNA(Asx) + AMP + diphosphate. Its function is as follows. Aspartyl-tRNA synthetase with relaxed tRNA specificity since it is able to aspartylate not only its cognate tRNA(Asp) but also tRNA(Asn). Reaction proceeds in two steps: L-aspartate is first activated by ATP to form Asp-AMP and then transferred to the acceptor end of tRNA(Asp/Asn). The chain is Aspartate--tRNA(Asp/Asn) ligase from Ruegeria sp. (strain TM1040) (Silicibacter sp.).